Here is a 483-residue protein sequence, read N- to C-terminus: Jacalin-related lectin 13 (483 aa).

Positions 1–20 (MTQKLESVGSERKSSEYMWD) are disordered. 3 consecutive Jacalin-type lectin domains span residues 2–147 (TQKL…YVTW), 150–295 (PARM…YFTT), and 307–461 (FREK…YFFP).

The protein belongs to the jacalin lectin family.

This chain is Jacalin-related lectin 13 (JAL13), found in Arabidopsis thaliana (Mouse-ear cress).